The chain runs to 149 residues: Transcriptional repressor NrdR (149 aa).

A zinc finger spans residues 3 to 34; it reads CPFCSATDTKVIDSRLVADGHQVRRRRECVQC. The region spanning 49–139 is the ATP-cone domain; that stretch reads PRVVKQDGSR…VYRAFEDVSE (91 aa).

This sequence belongs to the NrdR family. Zn(2+) serves as cofactor.

Negatively regulates transcription of bacterial ribonucleotide reductase nrd genes and operons by binding to NrdR-boxes. This is Transcriptional repressor NrdR from Shewanella pealeana (strain ATCC 700345 / ANG-SQ1).